We begin with the raw amino-acid sequence, 570 residues long: Sorting nexin-41 (570 aa).

Disordered stretches follow at residues 1-31 (MSDF…PSAS) and 81-115 (FDDG…TTAS). The span at 84-101 (GSNSFSATPTASITNQND) shows a compositional bias: polar residues. Residues 98 to 236 (NQNDTAHEAT…RFLDPHASWS (139 aa)) form the PX domain. Residues arginine 153, serine 155, lysine 179, and arginine 202 each contribute to the a 1,2-diacyl-sn-glycero-3-phospho-(1D-myo-inositol-3-phosphate) site. Residues 429–498 (DSQRINDALG…ASRRQGIGKT (70 aa)) form a disordered region. Residues 440–454 (TRSNNGPSTTNSGEQ) show a composition bias toward polar residues. Over residues 455 to 464 (PSASPAPKKS) the composition is skewed to low complexity.

It belongs to the sorting nexin family.

It localises to the endosome membrane. The protein localises to the endomembrane system. Its function is as follows. May be required for cytoplasm to vacuole transport (Cvt) and pexophagy. The sequence is that of Sorting nexin-41 (SNX41) from Yarrowia lipolytica (strain CLIB 122 / E 150) (Yeast).